A 113-amino-acid polypeptide reads, in one-letter code: Na(+)/H(+) antiporter subunit C1 (113 aa).

A run of 3 helical transmembrane segments spans residues methionine 1–leucine 21, isoleucine 28–glycine 48, and leucine 72–phenylalanine 92.

This sequence belongs to the CPA3 antiporters (TC 2.A.63) subunit C family. As to quaternary structure, may form a heterooligomeric complex that consists of seven subunits: mnhA1, mnhB1, mnhC1, mnhD1, mnhE1, mnhF1 and mnhG1.

The protein resides in the cell membrane. In terms of biological role, mnh complex is a Na(+)/H(+) antiporter involved in Na(+) excretion. This chain is Na(+)/H(+) antiporter subunit C1 (mnhC1), found in Staphylococcus haemolyticus (strain JCSC1435).